We begin with the raw amino-acid sequence, 595 residues long: MSHIRNFSIIAHIDHGKSTLADRFIQMCGGLSEREMEAQVLDSMDLERERGITIKAHSVTLYYKAKDGITYQLNFIDTPGHVDFTYEVSRSLAACEGALLVVDAGQGVEAQSVANCYTAIEQGLEVMPVLNKMDLPQADPDRVKEEIEKIIGIDATDAVACSAKSGMGVDEVLERLVATIPAPTGNIEDPLQALIIDSWFDNYLGVVSLVRVRHGRVKKGDKILVKSTGKLHLVDSVGVFNPKHTATVDLKAGEVGFIIAGIKDIHGAPVGDTLTLSTTPDVDVLPGFKRIQPQVYAGLFPVSSDDFEDFREALQKLTLNDSSLQYLPESSDALGFGFRCGFLGMLHMEIIQERLEREYNLDLITTAPTVIFELLLKTGETIYVDNPSKLPDLSSIEDMREPIVRANILVPQEHLGNVITLCIEKRGVQHDMLFLGTQVQVSYDLPMNEVVLDFFDRLKSVSRGYASLDYHFDRYQSANLVKLDVLINAEKVDALALIVHRDNAHYKGRALTEKMKELIPRQMFDVAIQAAIGGQIVARTTVKALRKNVLAKCYGGDVSRKRKLLEKQKAGKKRMKQVGNVEIPQEAFLAVLRLE.

Residues 2 to 184 (SHIRNFSIIA…RLVATIPAPT (183 aa)) enclose the tr-type G domain. GTP is bound by residues 14–19 (DHGKST) and 131–134 (NKMD).

Belongs to the TRAFAC class translation factor GTPase superfamily. Classic translation factor GTPase family. LepA subfamily.

The protein localises to the cell inner membrane. The catalysed reaction is GTP + H2O = GDP + phosphate + H(+). Its function is as follows. Required for accurate and efficient protein synthesis under certain stress conditions. May act as a fidelity factor of the translation reaction, by catalyzing a one-codon backward translocation of tRNAs on improperly translocated ribosomes. Back-translocation proceeds from a post-translocation (POST) complex to a pre-translocation (PRE) complex, thus giving elongation factor G a second chance to translocate the tRNAs correctly. Binds to ribosomes in a GTP-dependent manner. This chain is Elongation factor 4, found in Pseudomonas savastanoi pv. phaseolicola (strain 1448A / Race 6) (Pseudomonas syringae pv. phaseolicola (strain 1448A / Race 6)).